The following is a 202-amino-acid chain: Arenicin-2 (202 aa).

The signal sequence occupies residues 1–25 (MTSTQSVAVYATLILAIFCFNDIHC). Residues 26–181 (DPIAEARAAA…SGDNNEPEKR (156 aa)) constitute a propeptide that is removed on maturation. A BRICHOS domain is found at 73-168 (GDGVEGSVMV…ACQGKSVYWL (96 aa)). Disulfide bonds link cysteine 100–cysteine 160 and cysteine 184–cysteine 201.

Has antimicrobial activity against the Gram-negative bacteria E.coli and P.mirabilis, the Gram-positive bacterium L.monocytogenes and the yeast C.albicans. The polypeptide is Arenicin-2 (Arenicola marina (Lugworm)).